The following is a 119-amino-acid chain: U-scoloptoxin(01)-Er1a (119 aa).

An N-terminal signal peptide occupies residues M1–M22. One can recognise a Chitin-binding type-2 domain in the interval N39–D97. A disulfide bridge connects residues C74 and C87.

Belongs to the scoloptoxin-01 family. Post-translationally, contains 3 disulfide bonds. Expressed by the venom gland.

It localises to the secreted. This chain is U-scoloptoxin(01)-Er1a, found in Ethmostigmus rubripes (Giant centipede).